Reading from the N-terminus, the 206-residue chain is Glycerol-3-phosphate acyltransferase (206 aa).

The next 5 membrane-spanning stretches (helical) occupy residues 3-23, 47-67, 79-99, 119-139, and 152-172; these read LSLI…VIIG, VLGP…GTLA, HSLV…SIFL, PLFF…TSMV, and ILSF…VLIF.

The protein belongs to the PlsY family. Probably interacts with PlsX.

It is found in the cell membrane. It carries out the reaction an acyl phosphate + sn-glycerol 3-phosphate = a 1-acyl-sn-glycero-3-phosphate + phosphate. Its pathway is lipid metabolism; phospholipid metabolism. Its function is as follows. Catalyzes the transfer of an acyl group from acyl-phosphate (acyl-PO(4)) to glycerol-3-phosphate (G3P) to form lysophosphatidic acid (LPA). This enzyme utilizes acyl-phosphate as fatty acyl donor, but not acyl-CoA or acyl-ACP. The protein is Glycerol-3-phosphate acyltransferase of Latilactobacillus sakei subsp. sakei (strain 23K) (Lactobacillus sakei subsp. sakei).